The following is a 92-amino-acid chain: Cell division topological specificity factor (92 aa).

This sequence belongs to the MinE family.

Prevents the cell division inhibition by proteins MinC and MinD at internal division sites while permitting inhibition at polar sites. This ensures cell division at the proper site by restricting the formation of a division septum at the midpoint of the long axis of the cell. In Desulforamulus reducens (strain ATCC BAA-1160 / DSM 100696 / MI-1) (Desulfotomaculum reducens), this protein is Cell division topological specificity factor.